The following is a 113-amino-acid chain: Dolichyl-diphosphooligosaccharide--protein glycosyltransferase subunit DAD1 (113 aa).

Position 2 is an N-acetylserine (serine 2). The Cytoplasmic portion of the chain corresponds to 2 to 30 (SASVLSVISRFLEEYLSSTPQRLKLLDAY). The helical transmembrane segment at 31-51 (LLYILLTGALQFGYCLLVGTF) threads the bilayer. A topological domain (lumenal) is located at residue proline 52. A helical transmembrane segment spans residues 53 to 73 (FNSFLSGFISCVGSFILAVCL). At 74-92 (RIQINPQNKADFQGISPER) the chain is on the cytoplasmic side. A helical membrane pass occupies residues 93–113 (AFADFLFASTILHLVVMNFVG).

Belongs to the DAD/OST2 family. In terms of assembly, component of the oligosaccharyltransferase (OST) complex. OST exists in two different complex forms which contain common core subunits RPN1, RPN2, OST48, OST4, DAD1 and TMEM258, either STT3A or STT3B as catalytic subunits, and form-specific accessory subunits. STT3A complex assembly occurs through the formation of 3 subcomplexes. Subcomplex 1 contains RPN1 and TMEM258, subcomplex 2 contains the STT3A-specific subunits STT3A, DC2/OSTC, and KCP2 as well as the core subunit OST4, and subcomplex 3 contains RPN2, DAD1, and OST48. The STT3A complex can form stable complexes with the Sec61 complex or with both the Sec61 and TRAP complexes.

It localises to the endoplasmic reticulum membrane. It functions in the pathway protein modification; protein glycosylation. Its function is as follows. Subunit of the oligosaccharyl transferase (OST) complex that catalyzes the initial transfer of a defined glycan (Glc(3)Man(9)GlcNAc(2) in eukaryotes) from the lipid carrier dolichol-pyrophosphate to an asparagine residue within an Asn-X-Ser/Thr consensus motif in nascent polypeptide chains, the first step in protein N-glycosylation. N-glycosylation occurs cotranslationally and the complex associates with the Sec61 complex at the channel-forming translocon complex that mediates protein translocation across the endoplasmic reticulum (ER). All subunits are required for a maximal enzyme activity. This is Dolichyl-diphosphooligosaccharide--protein glycosyltransferase subunit DAD1 from Sus scrofa (Pig).